A 353-amino-acid chain; its full sequence is Quinolinate synthase (353 aa).

Histidine 47 and serine 68 together coordinate iminosuccinate. A [4Fe-4S] cluster-binding site is contributed by cysteine 113. Iminosuccinate-binding positions include 139 to 141 and serine 156; that span reads YAN. Residue cysteine 200 participates in [4Fe-4S] cluster binding. Iminosuccinate contacts are provided by residues 226–228 and threonine 243; that span reads HPE. Position 297 (cysteine 297) interacts with [4Fe-4S] cluster.

Belongs to the quinolinate synthase family. Type 1 subfamily. [4Fe-4S] cluster is required as a cofactor.

The protein resides in the cytoplasm. It catalyses the reaction iminosuccinate + dihydroxyacetone phosphate = quinolinate + phosphate + 2 H2O + H(+). The protein operates within cofactor biosynthesis; NAD(+) biosynthesis; quinolinate from iminoaspartate: step 1/1. In terms of biological role, catalyzes the condensation of iminoaspartate with dihydroxyacetone phosphate to form quinolinate. The chain is Quinolinate synthase from Pectobacterium carotovorum subsp. carotovorum (strain PC1).